The sequence spans 230 residues: Ribonuclease 3 (230 aa).

One can recognise an RNase III domain in the interval 1-134; that stretch reads MKQLEELLST…FLGALLLDKG (134 aa). Glu47 lines the Mg(2+) pocket. Asp51 is an active-site residue. Positions 120 and 123 each coordinate Mg(2+). Glu123 is an active-site residue. In terms of domain architecture, DRBM spans 160–229; sequence DYKTCLQEFL…AKNALAQLSE (70 aa).

This sequence belongs to the ribonuclease III family. Homodimer. It depends on Mg(2+) as a cofactor.

Its subcellular location is the cytoplasm. It carries out the reaction Endonucleolytic cleavage to 5'-phosphomonoester.. Functionally, digests double-stranded RNA. Involved in the processing of primary rRNA transcript to yield the immediate precursors to the large and small rRNAs (23S and 16S). Processes some mRNAs, and tRNAs when they are encoded in the rRNA operon. Processes pre-crRNA and tracrRNA of type II CRISPR loci if present in the organism. In Streptococcus pyogenes serotype M49 (strain NZ131), this protein is Ribonuclease 3.